The sequence spans 405 residues: S-adenosylmethionine synthase (405 aa).

Histidine 22 serves as a coordination point for ATP. Aspartate 24 is a binding site for Mg(2+). Glutamate 50 serves as a coordination point for K(+). Glutamate 63 and glutamine 107 together coordinate L-methionine. Residues 107–117 form a flexible loop region; the sequence is QSPDIAQGVNR. ATP contacts are provided by residues 184 to 186, 250 to 251, aspartate 259, 265 to 266, alanine 282, and lysine 286; these read DGK, RF, and RK. Aspartate 259 lines the L-methionine pocket. Residue lysine 290 coordinates L-methionine.

It belongs to the AdoMet synthase family. As to quaternary structure, homotetramer; dimer of dimers. Mg(2+) is required as a cofactor. The cofactor is K(+).

It localises to the cytoplasm. The enzyme catalyses L-methionine + ATP + H2O = S-adenosyl-L-methionine + phosphate + diphosphate. It participates in amino-acid biosynthesis; S-adenosyl-L-methionine biosynthesis; S-adenosyl-L-methionine from L-methionine: step 1/1. Its function is as follows. Catalyzes the formation of S-adenosylmethionine (AdoMet) from methionine and ATP. The overall synthetic reaction is composed of two sequential steps, AdoMet formation and the subsequent tripolyphosphate hydrolysis which occurs prior to release of AdoMet from the enzyme. The chain is S-adenosylmethionine synthase from Roseiflexus castenholzii (strain DSM 13941 / HLO8).